We begin with the raw amino-acid sequence, 2097 residues long: SCAR-like protein 1 (2097 aa).

Disordered stretches follow at residues 205-227, 544-565, 1443-1467, 1588-1616, 1730-1802, 1820-1842, and 1893-1944; these read IANSESHTTSKDRSSRKVPPRTT, AHSSDKQSSQKSSGLDGSSIES, SQIASCSPTPSNEKIDELNAPPLSS, STEETYRLSSPVPPPNEPFSNVSYEDPQK, QERV…EKTV, ASSHVSENGCNQQSHGESLPVTS, and YEGP…EGGY. Low complexity predominate over residues 549–562; sequence KQSSQKSSGLDGSS. A compositionally biased stretch (polar residues) spans 1443 to 1454; sequence SQIASCSPTPSN. The segment covering 1766-1794 has biased composition (polar residues); that stretch reads SISQQGLQGSVFPSDTSDNGEHSSYTSRA. A compositionally biased stretch (basic and acidic residues) spans 1908-1922; it reads YPHDDHNSEKEDIHQ. The 19-residue stretch at 2028–2046 folds into the WH2 domain; the sequence is ERNLLLEQIRNKTFNLKPV.

The protein belongs to the SCAR/WAVE family.

The protein resides in the cytoplasm. The protein localises to the cytoskeleton. Its function is as follows. Involved in regulation of actin and microtubule organization. Part of a WAVE complex that activates the Arp2/3 complex. The chain is SCAR-like protein 1 from Oryza sativa subsp. japonica (Rice).